A 611-amino-acid polypeptide reads, in one-letter code: Protein spaetzle 3 (611 aa).

The signal sequence occupies residues 1 to 14 (MALTNFSLPFGALG). Asn-5 carries an N-linked (GlcNAc...) asparagine glycan. The interval 57-322 (EYFKNNPYAP…NDKSNNNQMP (266 aa)) is disordered. Composition is skewed to low complexity over residues 104-120 (QQVQQTQQQQTQQQHQQ), 127-153 (SVSFQSSSSRSSSSSTTGQSSIQLTQT), and 169-185 (PGQQAQPPQQQQPQQKQ). Residues 191–210 (GSASATFTKNSGSFSITSFG) show a composition bias toward polar residues. The segment covering 218–239 (PPQPQQPPPSQQQQPPPAPPPQ) has biased composition (pro residues). The span at 288–306 (YDVEEGEEDEEEDGEEEGQ) shows a compositional bias: acidic residues. N-linked (GlcNAc...) asparagine glycans are attached at residues Asn-335 and Asn-351. The interval 477–518 (KKRQAAAGGSRNRGGSAGGSGNGNTNANRQPGNKNGSSGTGR) is disordered. The segment covering 487–498 (RNRGGSAGGSGN) has biased composition (gly residues). The N-linked (GlcNAc...) asparagine glycan is linked to Asn-511. The Spaetzle domain maps to 521-609 (ACESKIEIVT…LFPSCCVCRC (89 aa)). Cystine bridges form between Cys-522–Cys-573, Cys-559–Cys-605, and Cys-567–Cys-607.

As to quaternary structure, homodimer; disulfide-linked.

Its function is as follows. Neurotrophin which may function as a ligand to the Toll-related receptor Tollo. Involved in a Tollo and JNK signaling pathway that positively regulates neuromuscular junction (NMJ) growth in presynaptic motorneurons. May function by activating Tollo to promote the phosphorylation of JNK. This Drosophila melanogaster (Fruit fly) protein is Protein spaetzle 3.